A 251-amino-acid polypeptide reads, in one-letter code: Phosphate import ATP-binding protein PstB (251 aa).

The region spanning 5 to 246 (IKIRGVNFFY…PRDKRTEDYI (242 aa)) is the ABC transporter domain. 37–44 (GPSGCGKS) is a binding site for ATP.

This sequence belongs to the ABC transporter superfamily. Phosphate importer (TC 3.A.1.7) family. In terms of assembly, the complex is composed of two ATP-binding proteins (PstB), two transmembrane proteins (PstC and PstA) and a solute-binding protein (PstS).

It localises to the cell membrane. The catalysed reaction is phosphate(out) + ATP + H2O = ADP + 2 phosphate(in) + H(+). Functionally, part of the ABC transporter complex PstSACB involved in phosphate import. Responsible for energy coupling to the transport system. This chain is Phosphate import ATP-binding protein PstB, found in Dehalococcoides mccartyi (strain CBDB1).